A 235-amino-acid polypeptide reads, in one-letter code: Urease accessory protein UreF (235 aa).

It belongs to the UreF family. As to quaternary structure, ureD, UreF and UreG form a complex that acts as a GTP-hydrolysis-dependent molecular chaperone, activating the urease apoprotein by helping to assemble the nickel containing metallocenter of UreC. The UreE protein probably delivers the nickel.

It localises to the cytoplasm. Required for maturation of urease via the functional incorporation of the urease nickel metallocenter. The polypeptide is Urease accessory protein UreF (Ureaplasma urealyticum serovar 10 (strain ATCC 33699 / Western)).